The chain runs to 439 residues: 3-phosphoshikimate 1-carboxyvinyltransferase (439 aa).

3-phosphoshikimate contacts are provided by K21, S22, and R26. Position 21 (K21) interacts with phosphoenolpyruvate. Residues G94 and R122 each contribute to the phosphoenolpyruvate site. 3-phosphoshikimate-binding residues include S167, Q169, D320, and K347. Q169 contributes to the phosphoenolpyruvate binding site. D320 (proton acceptor) is an active-site residue. The phosphoenolpyruvate site is built by R351 and R395.

It belongs to the EPSP synthase family. As to quaternary structure, monomer.

The protein localises to the cytoplasm. It catalyses the reaction 3-phosphoshikimate + phosphoenolpyruvate = 5-O-(1-carboxyvinyl)-3-phosphoshikimate + phosphate. The protein operates within metabolic intermediate biosynthesis; chorismate biosynthesis; chorismate from D-erythrose 4-phosphate and phosphoenolpyruvate: step 6/7. Its function is as follows. Catalyzes the transfer of the enolpyruvyl moiety of phosphoenolpyruvate (PEP) to the 5-hydroxyl of shikimate-3-phosphate (S3P) to produce enolpyruvyl shikimate-3-phosphate and inorganic phosphate. The sequence is that of 3-phosphoshikimate 1-carboxyvinyltransferase from Hyphomonas neptunium (strain ATCC 15444).